A 783-amino-acid chain; its full sequence is Protein DWD HYPERSENSITIVE TO UV-B 1 (783 aa).

2 WD repeats span residues Gly-145–Pro-198 and Ser-212–Leu-256. The Nuclear localization signal signature appears at Arg-382–Arg-389. WD repeat units follow at residues Asp-439–Tyr-480, Gly-485–Thr-525, Asp-538–Val-577, Met-581–Cys-621, Ser-625–Asn-664, and Glu-666–Arg-710.

In terms of assembly, interacts directly with DDB1A. Binds to COP1 and RUP1.

It localises to the nucleus. In terms of biological role, may act as a substrate receptor of a CUL4-RING E3 ubiquitin-protein ligase (CRL4) complex involved in the negative regulation of cellular responses to ultraviolet-B (UV-B) illumination, likely in coordination with RUP1. Interacts with COP1 and probably prevents the formation of active UVR8-COP1 complex, thus avoiding UVR8-COP1-mediated positive regulation of UV-B responses. This is Protein DWD HYPERSENSITIVE TO UV-B 1 from Arabidopsis thaliana (Mouse-ear cress).